The primary structure comprises 477 residues: ATP synthase subunit beta (477 aa).

148 to 155 (GGAGVGKT) lines the ATP pocket.

It belongs to the ATPase alpha/beta chains family. As to quaternary structure, F-type ATPases have 2 components, CF(1) - the catalytic core - and CF(0) - the membrane proton channel. CF(1) has five subunits: alpha(3), beta(3), gamma(1), delta(1), epsilon(1). CF(0) has three main subunits: a(1), b(2) and c(9-12). The alpha and beta chains form an alternating ring which encloses part of the gamma chain. CF(1) is attached to CF(0) by a central stalk formed by the gamma and epsilon chains, while a peripheral stalk is formed by the delta and b chains.

The protein localises to the cell inner membrane. It catalyses the reaction ATP + H2O + 4 H(+)(in) = ADP + phosphate + 5 H(+)(out). Functionally, produces ATP from ADP in the presence of a proton gradient across the membrane. The catalytic sites are hosted primarily by the beta subunits. In Psychrobacter arcticus (strain DSM 17307 / VKM B-2377 / 273-4), this protein is ATP synthase subunit beta.